Here is a 349-residue protein sequence, read N- to C-terminus: DNA replication and repair protein RecF (349 aa).

Position 30 to 37 (30 to 37 (GKNGSGKT)) interacts with ATP.

It belongs to the RecF family.

It localises to the cytoplasm. Functionally, the RecF protein is involved in DNA metabolism; it is required for DNA replication and normal SOS inducibility. RecF binds preferentially to single-stranded, linear DNA. It also seems to bind ATP. The protein is DNA replication and repair protein RecF of Francisella tularensis subsp. novicida (strain U112).